The primary structure comprises 387 residues: MQVQILRMSRALAELGVRQQVLTVGFPGLPRVRRDSENLVVRITRAPLPRLRSRITGLVGLNQAWLAAALTECVKLRRRWPADLIQVHLDGQLWALLAGPVAARLVGVPYTVTVHCSRLAVYQPMSTVDRIQHPLVTAVERWALRRAAGITTLTERTATVLAAELGAAQRVIDVVPDAVDPDRAEAAPAEVERLKKRFGLPQEGGPVIGFVGRIAHEKGWRHAVQAVAELADAGRDFTFLVVGDGPQRADMEAAVAEAGLTDRFVFTGFLPNDEIPAVMTALDVLLMPSVHEELGGSAVEAMLAGTPVAAYGVGGLCDTVGKVTPSLLAAPGQVAELARTVKRVLDDPAPVLAELRAGREWLADEFGVHHAAGLALAHYERVLGKER.

This sequence belongs to the glycosyltransferase group 1 family.

It carries out the reaction 2-deoxystreptamine + UDP-N-acetyl-alpha-D-glucosamine = 2'-N-acetylparomamine + UDP + H(+). The enzyme catalyses 2-deoxystreptamine + UDP-alpha-D-glucose = 2'-deamino-2'-hydroxyparomamine + UDP + H(+). Its pathway is antibiotic biosynthesis; kanamycin biosynthesis. Its function is as follows. Glycosyltransferase involved in the biosynthesis of kanamycin by mediating conversion of 2-deoxystreptamine (2-DOS) to 2'-N-acetylparomamine using UDP-alpha-D-glucose as sugar donor. Can also accept UDP-alpha-D-glucosamine, but with a much lower activity compared to UDP-alpha-D-glucose. This Streptomyces kanamyceticus protein is 2-deoxystreptamine glucosyltransferase (kanF).